Consider the following 153-residue polypeptide: MAAGLFGLSARRLLAAAATRGLPAARVRWESSFSRTVVAPSAVARKRLPEPTTQWQEDLDPEDENLYEKNPDSHGYDKDPVLDVWNMRLVFFFGVSIILVLGSTFVAYLPDYRMKEWSRREAERLVKYREANGLPIMESNCFDPSKIQLPEDE.

Residues 1–29 constitute a mitochondrion transit peptide; the sequence is MAAGLFGLSARRLLAAAATRGLPAARVRW. The disordered stretch occupies residues 49 to 72; the sequence is PEPTTQWQEDLDPEDENLYEKNPD. A helical membrane pass occupies residues 89 to 109; the sequence is LVFFFGVSIILVLGSTFVAYL.

This sequence belongs to the complex I NDUFB11 subunit family. As to quaternary structure, complex I is composed of 45 different subunits. Interacts with BCAP31.

The protein localises to the mitochondrion inner membrane. In terms of biological role, accessory subunit of the mitochondrial membrane respiratory chain NADH dehydrogenase (Complex I), that is believed not to be involved in catalysis. Complex I functions in the transfer of electrons from NADH to the respiratory chain. The immediate electron acceptor for the enzyme is believed to be ubiquinone. This is NADH dehydrogenase [ubiquinone] 1 beta subcomplex subunit 11, mitochondrial (NDUFB11) from Pongo pygmaeus (Bornean orangutan).